The chain runs to 461 residues: Glucan endo-1,3-beta-glucosidase (461 aa).

The signal sequence occupies residues 1–23; the sequence is MPLLILLMLLAAGAAGAESATPS. The Proton donor role is filled by Glu-123. The active-site Nucleophile is the Glu-265. The tract at residues 350–375 is disordered; the sequence is GASVAPTPSPNPSPNPSPKPAPSGGG. Over residues 356–370 the composition is skewed to pro residues; the sequence is TPSPNPSPNPSPKPA. Cys-378 and Cys-439 are joined by a disulfide.

This sequence belongs to the glycosyl hydrolase 17 family. In terms of processing, contains two additional disulfide bonds.

It catalyses the reaction Hydrolysis of (1-&gt;3)-beta-D-glucosidic linkages in (1-&gt;3)-beta-D-glucans.. Is thought to be an important plant defense-related product against fungal pathogens. The sequence is that of Glucan endo-1,3-beta-glucosidase (GLC1) from Triticum aestivum (Wheat).